The primary structure comprises 486 residues: Cardiolipin synthase A (486 aa).

2 helical membrane-spanning segments follow: residues 3–23 (TFYTVISWLMVFGYWLLIAGV) and 38–58 (MAWLLVIYILPLFGIVAYLSF). 2 PLD phosphodiesterase domains span residues 219–246 (MDLRQHRKVVLIDNYIAYTGSMNMVDPR) and 399–426 (EDGLLHTKSVLVDGQLSLVGTVNLDMRS). Active-site residues include histidine 224, lysine 226, aspartate 231, histidine 404, lysine 406, and aspartate 411.

It belongs to the phospholipase D family. Cardiolipin synthase subfamily. ClsA sub-subfamily.

The protein localises to the cell inner membrane. The enzyme catalyses 2 a 1,2-diacyl-sn-glycero-3-phospho-(1'-sn-glycerol) = a cardiolipin + glycerol. Functionally, catalyzes the reversible phosphatidyl group transfer from one phosphatidylglycerol molecule to another to form cardiolipin (CL) (diphosphatidylglycerol) and glycerol. The sequence is that of Cardiolipin synthase A from Serratia proteamaculans (strain 568).